The sequence spans 418 residues: Gamma-glutamyl phosphate reductase (418 aa).

The protein belongs to the gamma-glutamyl phosphate reductase family.

Its subcellular location is the cytoplasm. It catalyses the reaction L-glutamate 5-semialdehyde + phosphate + NADP(+) = L-glutamyl 5-phosphate + NADPH + H(+). It participates in amino-acid biosynthesis; L-proline biosynthesis; L-glutamate 5-semialdehyde from L-glutamate: step 2/2. Its function is as follows. Catalyzes the NADPH-dependent reduction of L-glutamate 5-phosphate into L-glutamate 5-semialdehyde and phosphate. The product spontaneously undergoes cyclization to form 1-pyrroline-5-carboxylate. The chain is Gamma-glutamyl phosphate reductase from Agathobacter rectalis (strain ATCC 33656 / DSM 3377 / JCM 17463 / KCTC 5835 / VPI 0990) (Eubacterium rectale).